Here is a 411-residue protein sequence, read N- to C-terminus: Argininosuccinate lyase (411 aa).

The protein belongs to the lyase 1 family. Argininosuccinate lyase subfamily.

It is found in the cytoplasm. The enzyme catalyses 2-(N(omega)-L-arginino)succinate = fumarate + L-arginine. It functions in the pathway amino-acid biosynthesis; L-arginine biosynthesis; L-arginine from L-ornithine and carbamoyl phosphate: step 3/3. The sequence is that of Argininosuccinate lyase from Legionella pneumophila (strain Paris).